A 947-amino-acid chain; its full sequence is Ionotropic receptor 25a (947 aa).

The first 30 residues, 1–30 (MILMNPKTSKILWLLGFLSLLSSFSLEIAA), serve as a signal peptide directing secretion. Topologically, residues 31-562 (QTTQNINVLF…SLFKFLTVLE (532 aa)) are extracellular. 4 N-linked (GlcNAc...) asparagine glycosylation sites follow: Asn-78, Asn-177, Asn-277, and Asn-434. The chain crosses the membrane as a helical span at residues 563-583 (TNVWLCILAAYFFTSFLMWIF). Residues 584-641 (DRWSPYSYQNNREKYKDDEEKREFNLKECLWFCMTSLTPQGGGEAPKNLSGRLVAATW) are Cytoplasmic-facing. The helical transmembrane segment at 642–662 (WLFGFIIIASYTANLAAFLTV) threads the bilayer. Residues 663-858 (SRLDTPVESL…DQSDGISIQN (196 aa)) are Extracellular-facing. Residues Asn-687, Asn-715, and Asn-762 are each glycosylated (N-linked (GlcNAc...) asparagine). Residues 859-879 (IGGVFIVIFVGIGMACITLVF) form a helical membrane-spanning segment. Topologically, residues 880 to 947 (EYWWYRYRKN…QYPATFKPRF (68 aa)) are cytoplasmic.

It belongs to the glutamate-gated ion channel (TC 1.A.10.1) family. Interacts with nocte. In terms of tissue distribution, in the antenna, detected in neurons of the arista and also detected in sacculus neurons which innervate the first and second chambers (at protein level). Throughout the main body of the antenna, expressed in neurons which innervate the coeloconic class of olfactory sensilla (at protein level). Expressed in multiple cells of the dorsal organ including the dorsal organ cool cells (at protein level). Detected in femur and retina. Expressed in a subset of femur chordonotal neurons and antennal Johnston's Organ neurons.

The protein resides in the cell membrane. The protein localises to the cell projection. Its subcellular location is the axon. It is found in the dendrite. It localises to the perikaryon. The protein resides in the cilium. Its function is as follows. Integral part of various neural sensory systems in the antenna that provide the neural basis for the response to environmental changes in temperature (thermosensation), humidity (hygrosensation) and odor detection. Required for odor-evoked electrophysiological responses in multiple neuron classes in the antenna and is likely to function as part of an olfactory receptor complex with Ir76a and Ir76b. Together with Ir21a and Ir93a, mediates the response of the larval dorsal organ cool cells, a trio of cool-responsive neurons, to cooling and is required for cool avoidance behavior. Required in chordonotal organ neurons for behavioral synchronization to low-amplitude temperature cycles and mediates circadian clock resetting by temperature. Together with Ir40a and Ir93a, mediates the response of the hydrosensory sacculus neurons to changes in relative humidity, and is required for dry detection and humidiy preference behavior. The sequence is that of Ionotropic receptor 25a from Drosophila melanogaster (Fruit fly).